Consider the following 623-residue polypeptide: Chaperone protein HtpG (623 aa).

The a; substrate-binding stretch occupies residues 1 to 330 (MIMTQEKKKF…SEDLPLNISR (330 aa)). The b stretch occupies residues 331 to 546 (ESLQHNSVLE…DAAMDIRMER (216 aa)). Residues 477–497 (SDIDVEQTTSQSEEKNTDSKK) form a disordered region. The span at 488-497 (SEEKNTDSKK) shows a compositional bias: basic and acidic residues. The c stretch occupies residues 547-623 (FLIEQKQIAN…LNDIVQKAIL (77 aa)).

It belongs to the heat shock protein 90 family. Homodimer.

The protein resides in the cytoplasm. In terms of biological role, molecular chaperone. Has ATPase activity. This chain is Chaperone protein HtpG, found in Rickettsia massiliae (strain Mtu5).